Consider the following 291-residue polypeptide: 33 kDa chaperonin (291 aa).

Intrachain disulfides connect cysteine 229–cysteine 231 and cysteine 262–cysteine 265.

It belongs to the HSP33 family. In terms of processing, under oxidizing conditions two disulfide bonds are formed involving the reactive cysteines. Under reducing conditions zinc is bound to the reactive cysteines and the protein is inactive.

It is found in the cytoplasm. Functionally, redox regulated molecular chaperone. Protects both thermally unfolding and oxidatively damaged proteins from irreversible aggregation. Plays an important role in the bacterial defense system toward oxidative stress. In Vibrio vulnificus (strain YJ016), this protein is 33 kDa chaperonin.